Here is a 977-residue protein sequence, read N- to C-terminus: Probable RNA-dependent RNA polymerase 5 (977 aa).

The interval 103–122 (EEMSVDSDAPSPKSLKSEDK) is disordered.

It belongs to the RdRP family.

The enzyme catalyses RNA(n) + a ribonucleoside 5'-triphosphate = RNA(n+1) + diphosphate. Functionally, probably involved in the RNA silencing pathway and required for the generation of small interfering RNAs (siRNAs). The sequence is that of Probable RNA-dependent RNA polymerase 5 (RDR5) from Arabidopsis thaliana (Mouse-ear cress).